The sequence spans 62 residues: DCPSGWSSYEGHCYRFFHPPKDWADAERFCTEQAKGGALVSIQRFGEEDFVSNLITKNLQRG.

Cys2 and Cys13 are disulfide-bonded. A C-type lectin domain is found at Tyr9–Gly62.

It belongs to the snaclec family. In terms of assembly, heterodimer; disulfide-linked. In terms of tissue distribution, expressed by the venom gland.

Its subcellular location is the secreted. Snaclec that binds to von Willebrand factor (VWF) and induces its interaction with GPIbalpha (GP1BA) (via the vWF A1 domain), resulting in platelet aggregation. Intravenous injection in mice induces a dose-dependent drop in platelet count (thrombocytopenia). Pretreatment by intravenous injection by this protein in mice potentiates the hemorrhagic lesion in the skin provoked by the metalloproteinase BaP1 intradermally injected. This result is not observed when both BaP1 and this protein are injected simultaneously. The polypeptide is Snaclec aspercetin subunit alpha (Bothrops asper (Terciopelo)).